We begin with the raw amino-acid sequence, 54 residues long: Defensin-like protein 1 (54 aa).

4 cysteine pairs are disulfide-bonded: cysteine 6-cysteine 54, cysteine 17-cysteine 39, cysteine 23-cysteine 48, and cysteine 27-cysteine 50.

Belongs to the DEFL family.

The protein resides in the secreted. Its function is as follows. Possesses antifungal activity insensitive to inorganic cations. Causes germ tubes and hyphae to swell and form multiple hyphal buds. Binds to the plasma membrane of the fungus. Has no inhibitory effect on insect gut alpha-amylase. In Heuchera sanguinea (Coralbells), this protein is Defensin-like protein 1.